The following is a 111-amino-acid chain: UPF0145 protein Bphy_3680 (111 aa).

Belongs to the UPF0145 family.

This chain is UPF0145 protein Bphy_3680, found in Paraburkholderia phymatum (strain DSM 17167 / CIP 108236 / LMG 21445 / STM815) (Burkholderia phymatum).